An 868-amino-acid chain; its full sequence is Probable inorganic carbon transporter subunit DabA (868 aa).

Zn(2+) contacts are provided by Cys392, Asp394, His574, and Cys589.

This sequence belongs to the inorganic carbon transporter (TC 9.A.2) DabA family. As to quaternary structure, forms a complex with DabB. Zn(2+) is required as a cofactor.

It is found in the cell membrane. Functionally, part of an energy-coupled inorganic carbon pump. In Bacillus cereus (strain B4264), this protein is Probable inorganic carbon transporter subunit DabA.